Reading from the N-terminus, the 72-residue chain is Peptide Ctri9194 (72 aa).

The signal sequence occupies residues methionine 1–threonine 23. The residue at position 38 (isoleucine 38) is an Isoleucine amide. Positions serine 42–tyrosine 72 are excised as a propeptide.

It belongs to the non-disulfide-bridged peptide (NDBP) superfamily. Short antimicrobial peptide (group 4) family. As to expression, expressed by the venom gland.

The protein localises to the secreted. In terms of biological role, antimicrobial peptide. The polypeptide is Peptide Ctri9194 (Chaerilus tricostatus (Scorpion)).